Consider the following 1166-residue polypeptide: IQ domain-containing protein N (1166 aa).

Positions 1–19 (MQPATQLQFTNHLSPNGQC) are enriched in polar residues. The interval 1–56 (MQPATQLQFTNHLSPNGQCILQPPPTPSLPDKMEKAPPQPQHEGLKSEEHLPQQPA) is disordered. Positions 89–118 (HARAATLIQANWRGYRLRQKLISQMTAAKA) constitute an IQ 1 domain. Disordered regions lie at residues 431-450 (VCPGPAMAKTPPQTHPVATP), 769-797 (LSAPPWAKPEDRWTQPKPHGHVPGKTTQG), and 829-848 (DSGATRAQPSMPSQVVPCQE). 5 IQ domains span residues 907 to 932 (AVTTIQAGVRGYLVRRRIRVWHRRAT), 928 to 955 (HRRATVIQATWRGYRMRRNLAHLCRATT), 952 to 979 (RATTIIQAAWRGYSTRRDQARHRQMLHP), 1091 to 1119 (RDKAATAIQSAWRGFKIRQQMRQQQMAAK), and 1114 to 1143 (QQMAAKMVQATWRGHHTRSCLKSTEALLGP). Positions 1145–1166 (DPWSSSQHMHWASSQHTHWPGI) are disordered. The span at 1147-1166 (WSSSQHMHWASSQHTHWPGI) shows a compositional bias: polar residues.

Interacts with calmodulin.

Essential for spermiogenesis and fertilization. May be required for manchette assembly in elongating spermatids. In Macaca fascicularis (Crab-eating macaque), this protein is IQ domain-containing protein N (IQCN).